A 394-amino-acid polypeptide reads, in one-letter code: Glutamyl-tRNA reductase (394 aa).

Substrate-binding positions include 45–48, S99, 104–106, and Q110; these read TCNR and EEQ. Catalysis depends on C46, which acts as the Nucleophile. 175-180 contributes to the NADP(+) binding site; the sequence is GLGNIG.

The protein belongs to the glutamyl-tRNA reductase family. As to quaternary structure, homodimer.

The enzyme catalyses (S)-4-amino-5-oxopentanoate + tRNA(Glu) + NADP(+) = L-glutamyl-tRNA(Glu) + NADPH + H(+). The protein operates within porphyrin-containing compound metabolism; protoporphyrin-IX biosynthesis; 5-aminolevulinate from L-glutamyl-tRNA(Glu): step 1/2. In terms of biological role, catalyzes the NADPH-dependent reduction of glutamyl-tRNA(Glu) to glutamate 1-semialdehyde (GSA). The chain is Glutamyl-tRNA reductase from Caldicellulosiruptor saccharolyticus (strain ATCC 43494 / DSM 8903 / Tp8T 6331).